Consider the following 1578-residue polypeptide: Pentafunctional AROM polypeptide (1578 aa).

A 3-dehydroquinate synthase region spans residues 1 to 384 (MTGPTKISIL…YEPRASVVPN (384 aa)). NAD(+)-binding positions include 44–46 (DTN), 81–84 (EVSK), 114–116 (GGV), and Asp-119. Residue Arg-130 participates in 7-phospho-2-dehydro-3-deoxy-D-arabino-heptonate binding. Residue 139-140 (TT) participates in NAD(+) binding. Asp-146 and Lys-152 together coordinate 7-phospho-2-dehydro-3-deoxy-D-arabino-heptonate. Residue Lys-161 participates in NAD(+) binding. A 7-phospho-2-dehydro-3-deoxy-D-arabino-heptonate-binding site is contributed by Asn-162. NAD(+) is bound by residues 179–182 (FLET) and Asn-190. Glu-194 serves as a coordination point for Zn(2+). 7-phospho-2-dehydro-3-deoxy-D-arabino-heptonate-binding positions include 194–197 (EVIK) and Lys-250. The active-site Proton acceptor; for 3-dehydroquinate synthase activity is the Glu-260. 7-phospho-2-dehydro-3-deoxy-D-arabino-heptonate contacts are provided by residues 264 to 268 (RNLLN) and His-271. Zn(2+) is bound at residue His-271. The active-site Proton acceptor; for 3-dehydroquinate synthase activity is the His-275. 7-phospho-2-dehydro-3-deoxy-D-arabino-heptonate-binding residues include His-287 and Lys-356. A Zn(2+)-binding site is contributed by His-287. The segment at 397–842 (VYPGVSPASE…WDTLRQKFAV (446 aa)) is EPSP synthase. The active-site For EPSP synthase activity is the Cys-824. Residues 864-1055 (SASVFIIGMR…KKKQHSFFVS (192 aa)) are shikimate kinase. 871-878 (GMRGAGKT) is an ATP binding site. The interval 1056–1276 (LTLPDVRGAD…AAPGQLSATD (221 aa)) is 3-dehydroquinase. His-1179 serves as the catalytic Proton acceptor; for 3-dehydroquinate dehydratase activity. Lys-1207 functions as the Schiff-base intermediate with substrate; for 3-dehydroquinate dehydratase activity in the catalytic mechanism. Residues 1289 to 1578 (KKRFALFGSP…YERARAIVLG (290 aa)) are shikimate dehydrogenase.

This sequence in the N-terminal section; belongs to the sugar phosphate cyclases superfamily. Dehydroquinate synthase family. In the 2nd section; belongs to the EPSP synthase family. The protein in the 3rd section; belongs to the shikimate kinase family. It in the 4th section; belongs to the type-I 3-dehydroquinase family. This sequence in the C-terminal section; belongs to the shikimate dehydrogenase family. As to quaternary structure, homodimer. The cofactor is Zn(2+).

The protein localises to the cytoplasm. The enzyme catalyses 7-phospho-2-dehydro-3-deoxy-D-arabino-heptonate = 3-dehydroquinate + phosphate. The catalysed reaction is 3-dehydroquinate = 3-dehydroshikimate + H2O. It catalyses the reaction shikimate + NADP(+) = 3-dehydroshikimate + NADPH + H(+). It carries out the reaction shikimate + ATP = 3-phosphoshikimate + ADP + H(+). The enzyme catalyses 3-phosphoshikimate + phosphoenolpyruvate = 5-O-(1-carboxyvinyl)-3-phosphoshikimate + phosphate. Its pathway is metabolic intermediate biosynthesis; chorismate biosynthesis; chorismate from D-erythrose 4-phosphate and phosphoenolpyruvate: step 2/7. The protein operates within metabolic intermediate biosynthesis; chorismate biosynthesis; chorismate from D-erythrose 4-phosphate and phosphoenolpyruvate: step 3/7. It functions in the pathway metabolic intermediate biosynthesis; chorismate biosynthesis; chorismate from D-erythrose 4-phosphate and phosphoenolpyruvate: step 4/7. It participates in metabolic intermediate biosynthesis; chorismate biosynthesis; chorismate from D-erythrose 4-phosphate and phosphoenolpyruvate: step 5/7. Its pathway is metabolic intermediate biosynthesis; chorismate biosynthesis; chorismate from D-erythrose 4-phosphate and phosphoenolpyruvate: step 6/7. Functionally, the AROM polypeptide catalyzes 5 consecutive enzymatic reactions in prechorismate polyaromatic amino acid biosynthesis. This is Pentafunctional AROM polypeptide from Neosartorya fischeri (strain ATCC 1020 / DSM 3700 / CBS 544.65 / FGSC A1164 / JCM 1740 / NRRL 181 / WB 181) (Aspergillus fischerianus).